The sequence spans 401 residues: 2-amino-3-carboxymuconate-6-semialdehyde decarboxylase (401 aa).

Zn(2+) is bound by residues His-18 and His-20. Arg-59 contributes to the substrate binding site. His-234 and Asp-352 together coordinate Zn(2+).

Belongs to the metallo-dependent hydrolases superfamily. ACMSD family. As to quaternary structure, monomer.

The enzyme catalyses 2-amino-3-carboxymuconate 6-semialdehyde + H(+) = 2-aminomuconate 6-semialdehyde + CO2. The protein operates within secondary metabolite metabolism; quinolate metabolism. Its function is as follows. Converts alpha-amino-beta-carboxymuconate-epsilon-semialdehyde (ACMS) to alpha-aminomuconate semialdehyde (AMS). This chain is 2-amino-3-carboxymuconate-6-semialdehyde decarboxylase, found in Caenorhabditis elegans.